Reading from the N-terminus, the 157-residue chain is 6,7-dimethyl-8-ribityllumazine synthase (157 aa).

Residues F22, A57 to E59, and T81 to I83 contribute to the 5-amino-6-(D-ribitylamino)uracil site. G86–T87 serves as a coordination point for (2S)-2-hydroxy-3-oxobutyl phosphate. The active-site Proton donor is the H89. Residue F114 coordinates 5-amino-6-(D-ribitylamino)uracil. A (2S)-2-hydroxy-3-oxobutyl phosphate-binding site is contributed by R128.

The protein belongs to the DMRL synthase family. As to quaternary structure, forms an icosahedral capsid composed of 60 subunits, arranged as a dodecamer of pentamers.

It catalyses the reaction (2S)-2-hydroxy-3-oxobutyl phosphate + 5-amino-6-(D-ribitylamino)uracil = 6,7-dimethyl-8-(1-D-ribityl)lumazine + phosphate + 2 H2O + H(+). It participates in cofactor biosynthesis; riboflavin biosynthesis; riboflavin from 2-hydroxy-3-oxobutyl phosphate and 5-amino-6-(D-ribitylamino)uracil: step 1/2. In terms of biological role, catalyzes the formation of 6,7-dimethyl-8-ribityllumazine by condensation of 5-amino-6-(D-ribitylamino)uracil with 3,4-dihydroxy-2-butanone 4-phosphate. This is the penultimate step in the biosynthesis of riboflavin. The polypeptide is 6,7-dimethyl-8-ribityllumazine synthase (Haemophilus influenzae (strain 86-028NP)).